Reading from the N-terminus, the 187-residue chain is MTANHTDDPFLLDYLAGKVFAYPTEAVFGLGCDPDNEQAVNKLLALKQRDVSKGLILVGDNYSQLLPYVDDSAIKMTKRTEIFSSWPGPITWLLPKSKTAPSWVTGESEFIAVRVSAHPLIKDLCQRANKPLVSTSANTAGHPPALSADEVTSYFSNQVILIDGSLGGSRSPSKIRHGHSGQTIRDN.

One can recognise a YrdC-like domain in the interval 4–187 (NHTDDPFLLD…GHSGQTIRDN (184 aa)). The tract at residues 168–187 (GSRSPSKIRHGHSGQTIRDN) is disordered.

It belongs to the SUA5 family. TsaC subfamily.

Its subcellular location is the cytoplasm. It catalyses the reaction L-threonine + hydrogencarbonate + ATP = L-threonylcarbamoyladenylate + diphosphate + H2O. In terms of biological role, required for the formation of a threonylcarbamoyl group on adenosine at position 37 (t(6)A37) in tRNAs that read codons beginning with adenine. Catalyzes the conversion of L-threonine, HCO(3)(-)/CO(2) and ATP to give threonylcarbamoyl-AMP (TC-AMP) as the acyladenylate intermediate, with the release of diphosphate. This is Threonylcarbamoyl-AMP synthase from Pseudoalteromonas atlantica (strain T6c / ATCC BAA-1087).